The primary structure comprises 452 residues: Pup--protein ligase (452 aa).

Position 9 (Glu-9) interacts with Mg(2+). Arg-53 provides a ligand contact to ATP. Tyr-55 lines the Mg(2+) pocket. The active-site Proton acceptor is the Asp-57. Residue Glu-63 coordinates Mg(2+). Residues Thr-66 and Trp-419 each coordinate ATP.

Belongs to the Pup ligase/Pup deamidase family. Pup-conjugating enzyme subfamily.

It catalyses the reaction ATP + [prokaryotic ubiquitin-like protein]-L-glutamate + [protein]-L-lysine = ADP + phosphate + N(6)-([prokaryotic ubiquitin-like protein]-gamma-L-glutamyl)-[protein]-L-lysine.. The protein operates within protein degradation; proteasomal Pup-dependent pathway. Its pathway is protein modification; protein pupylation. Functionally, catalyzes the covalent attachment of the prokaryotic ubiquitin-like protein modifier Pup to the proteasomal substrate proteins, thereby targeting them for proteasomal degradation. This tagging system is termed pupylation. The ligation reaction involves the side-chain carboxylate of the C-terminal glutamate of Pup and the side-chain amino group of a substrate lysine. In Mycobacteroides abscessus (strain ATCC 19977 / DSM 44196 / CCUG 20993 / CIP 104536 / JCM 13569 / NCTC 13031 / TMC 1543 / L948) (Mycobacterium abscessus), this protein is Pup--protein ligase.